Reading from the N-terminus, the 179-residue chain is Large ribosomal subunit protein uL5 (179 aa).

Belongs to the universal ribosomal protein uL5 family. As to quaternary structure, part of the 50S ribosomal subunit; part of the 5S rRNA/L5/L18/L25 subcomplex. Contacts the 5S rRNA and the P site tRNA. Forms a bridge to the 30S subunit in the 70S ribosome.

This is one of the proteins that bind and probably mediate the attachment of the 5S RNA into the large ribosomal subunit, where it forms part of the central protuberance. In the 70S ribosome it contacts protein S13 of the 30S subunit (bridge B1b), connecting the 2 subunits; this bridge is implicated in subunit movement. Contacts the P site tRNA; the 5S rRNA and some of its associated proteins might help stabilize positioning of ribosome-bound tRNAs. The protein is Large ribosomal subunit protein uL5 of Prochlorococcus marinus (strain MIT 9313).